A 316-amino-acid polypeptide reads, in one-letter code: C1GALT1-specific chaperone 1 (316 aa).

Over 1–6 the chain is Cytoplasmic; that stretch reads MLSESS. A helical; Signal-anchor for type II membrane protein membrane pass occupies residues 7 to 26; sequence SFLKGVMLGSIFCALITMLG. Topologically, residues 27–316 are lumenal; it reads HIRIGNRMHH…FLPPNGSEND (290 aa).

The protein belongs to the glycosyltransferase 31 family. Beta3-Gal-T subfamily. In terms of assembly, associates with core 1 beta-3-galactosyltransferase (C1GALT1), probably not with the soluble active form.

It localises to the membrane. Its function is as follows. Probable chaperone required for the generation of 1 O-glycan Gal-beta1-3GalNAc-alpha1-Ser/Thr (T antigen), which is a precursor for many extended O-glycans in glycoproteins. Probably acts as a specific molecular chaperone assisting the folding/stability of core 1 beta-3-galactosyltransferase (C1GALT1). This chain is C1GALT1-specific chaperone 1 (C1galt1c1), found in Mus musculus (Mouse).